We begin with the raw amino-acid sequence, 297 residues long: Cbb3-type cytochrome c oxidase subunit CcoP (297 aa).

Topologically, residues 1-35 (MSKKPTTKKEVQTTGHQWDGIEELNTPLPRWWLWT) are cytoplasmic. The helical transmembrane segment at 36-56 (FYATIIWGVAYSIAMPAWPIF) threads the bilayer. The Periplasmic segment spans residues 57–297 (SDKATPGLLG…SYVHSLGGGQ (241 aa)). Cytochrome c domains lie at 108–199 (YTRN…LQIS) and 206–294 (VKAT…HSLG). Residues Cys-121, Cys-124, His-125, Met-174, Cys-219, Cys-222, His-223, and Met-264 each contribute to the heme c site.

It belongs to the CcoP / FixP family. As to quaternary structure, component of the cbb3-type cytochrome c oxidase at least composed of CcoN, CcoO, CcoQ and CcoP. Interacts with CcoQ. It depends on heme c as a cofactor.

The protein resides in the cell inner membrane. It participates in energy metabolism; oxidative phosphorylation. C-type cytochrome. Part of the cbb3-type cytochrome c oxidase complex. CcoP subunit is required for transferring electrons from donor cytochrome c via its heme groups to CcoO subunit. From there, electrons are shuttled to the catalytic binuclear center of CcoN subunit where oxygen reduction takes place. The complex also functions as a proton pump. The sequence is that of Cbb3-type cytochrome c oxidase subunit CcoP from Rhodobacter capsulatus (Rhodopseudomonas capsulata).